Consider the following 558-residue polypeptide: Formate--tetrahydrofolate ligase (558 aa).

66–73 (TPAGEGKT) contacts ATP.

This sequence belongs to the formate--tetrahydrofolate ligase family.

It catalyses the reaction (6S)-5,6,7,8-tetrahydrofolate + formate + ATP = (6R)-10-formyltetrahydrofolate + ADP + phosphate. It functions in the pathway one-carbon metabolism; tetrahydrofolate interconversion. The polypeptide is Formate--tetrahydrofolate ligase (Neisseria gonorrhoeae (strain NCCP11945)).